We begin with the raw amino-acid sequence, 245 residues long: Polyhedrin (245 aa).

The protein belongs to the polyhedrin family.

In terms of biological role, major component of the virus occlusion bodies, which are large proteinaceous structures (polyhedra), that protect the virus from the outside environment for extended periods until they are ingested by insect larvae. This is Polyhedrin (PH) from Bombyx mori nuclear polyhedrosis virus (BmNPV).